Here is a 795-residue protein sequence, read N- to C-terminus: Histone acetyltransferase KAT2A (795 aa).

Residues 1-18 (MADPAAQSSAQPRLQQAQ) show a composition bias toward polar residues. Residues 1 to 55 (MADPAAQSSAQPRLQQAQSSGPTGSNSNPGAGSSDPARPGLSQQQWSSQKKAQVR) are disordered. Residues 19–34 (SSGPTGSNSNPGAGSS) show a composition bias toward low complexity. Positions 461–614 (VIGNSLSQKS…GATLMECELN (154 aa)) constitute an N-acetyltransferase domain. Catalysis depends on glutamate 533, which acts as the Proton donor/acceptor. Residues 537 to 539 (CAV), 544 to 550 (QVKGYGT), and tyrosine 575 each bind acetyl-CoA. Residues 537–539 (CAV), 544–550 (QVKGYGT), and tyrosine 575 contribute to the succinyl-CoA site. The interval 597–606 (LGYIKDYEGA) is loop 3. In terms of domain architecture, Bromo spans 686 to 790 (KDPDLLYNML…KFFYFKLKEA (105 aa)).

The protein belongs to the acetyltransferase family. GCN5 subfamily.

Its subcellular location is the nucleus. The protein localises to the chromosome. The protein resides in the cytoplasm. It is found in the cytoskeleton. It localises to the microtubule organizing center. Its subcellular location is the centrosome. The enzyme catalyses L-lysyl-[histone] + acetyl-CoA = N(6)-acetyl-L-lysyl-[histone] + CoA + H(+). It catalyses the reaction L-lysyl-[protein] + acetyl-CoA = N(6)-acetyl-L-lysyl-[protein] + CoA + H(+). The catalysed reaction is succinyl-CoA + L-lysyl-[protein] = N(6)-succinyl-L-lysyl-[protein] + CoA + H(+). It carries out the reaction glutaryl-CoA + L-lysyl-[protein] = N(6)-glutaryl-L-lysyl-[protein] + CoA + H(+). In terms of biological role, protein lysine acyltransferase that can act as a acetyltransferase, glutaryltransferasesucc, succinyltransferase or malonyltransferase, depending on the context. Acts as a histone lysine succinyltransferase: catalyzes succinylation of histone H3 on 'Lys-79' (H3K79succ), with a maximum frequency around the transcription start sites of genes. Succinylation of histones gives a specific tag for epigenetic transcription activation. Association with the 2-oxoglutarate dehydrogenase complex, which provides succinyl-CoA, is required for histone succinylation. In different complexes, functions either as an acetyltransferase (HAT) or as a succinyltransferase: in the SAGA and ATAC complexes, acts as a histone acetyltransferase. Has significant histone acetyltransferase activity with core histones, but not with nucleosome core particles. Has a a strong preference for acetylation of H3 at 'Lys-9' (H3K9ac). Acetylation of histones gives a specific tag for epigenetic transcription activation. Also acetylates non-histone proteins, such as tbx5. Involved in heart and limb development by mediating acetylation of tbx5. Together with kat2b, required for growth and differentiation of craniofacial cartilage and bone by regulating acetylation of histone H3 at 'Lys-9' (H3K9ac). Also acts as a histone glutaryltransferase: catalyzes glutarylation of histone H4 on 'Lys-91' (H4K91glu), a mark that destabilizes nucleosomes by promoting dissociation of the H2A-H2B dimers from nucleosomes. The polypeptide is Histone acetyltransferase KAT2A (Danio rerio (Zebrafish)).